The chain runs to 66 residues: Putative alpha-neurotoxin RjAa16 (66 aa).

In terms of domain architecture, LCN-type CS-alpha/beta spans 1 to 60; the sequence is KEGYPVDWGNCKYECMSDAYCKDLCVDRKAKSGYCYKLNWFCYCEGLPDDSPIKTNGHCR. Intrachain disulfides connect Cys11/Cys59, Cys15/Cys35, Cys21/Cys42, and Cys25/Cys44.

This sequence belongs to the long (4 C-C) scorpion toxin superfamily. Sodium channel inhibitor family. Alpha subfamily. In terms of tissue distribution, expressed by the venom gland.

It localises to the secreted. In terms of biological role, alpha toxins bind voltage-independently at site-3 of sodium channels (Nav) and inhibits the inactivation of the activated channels, thereby blocking neuronal transmission. The protein is Putative alpha-neurotoxin RjAa16 of Rhopalurus junceus (Caribbean blue scorpion).